We begin with the raw amino-acid sequence, 605 residues long: Probable Xaa-Pro aminopeptidase P (605 aa).

Asp-402, Asp-413, Glu-511, and Glu-525 together coordinate Mn(2+).

This sequence belongs to the peptidase M24B family. Mn(2+) serves as cofactor.

The catalysed reaction is Release of any N-terminal amino acid, including proline, that is linked to proline, even from a dipeptide or tripeptide.. Catalyzes the removal of a penultimate prolyl residue from the N-termini of peptides. This Leptosphaeria maculans (strain JN3 / isolate v23.1.3 / race Av1-4-5-6-7-8) (Blackleg fungus) protein is Probable Xaa-Pro aminopeptidase P (AMPP).